The chain runs to 179 residues: ATP synthase subunit b (179 aa).

Residues 23 to 43 (IFWLIITFGILYVVLSKLILP) form a helical membrane-spanning segment.

It belongs to the ATPase B chain family. F-type ATPases have 2 components, F(1) - the catalytic core - and F(0) - the membrane proton channel. F(1) has five subunits: alpha(3), beta(3), gamma(1), delta(1), epsilon(1). F(0) has three main subunits: a(1), b(2) and c(10-14). The alpha and beta chains form an alternating ring which encloses part of the gamma chain. F(1) is attached to F(0) by a central stalk formed by the gamma and epsilon chains, while a peripheral stalk is formed by the delta and b chains.

The protein resides in the cell inner membrane. In terms of biological role, f(1)F(0) ATP synthase produces ATP from ADP in the presence of a proton or sodium gradient. F-type ATPases consist of two structural domains, F(1) containing the extramembraneous catalytic core and F(0) containing the membrane proton channel, linked together by a central stalk and a peripheral stalk. During catalysis, ATP synthesis in the catalytic domain of F(1) is coupled via a rotary mechanism of the central stalk subunits to proton translocation. Its function is as follows. Component of the F(0) channel, it forms part of the peripheral stalk, linking F(1) to F(0). This is ATP synthase subunit b from Pelagibacter ubique (strain HTCC1062).